The sequence spans 348 residues: Oxygen-dependent coproporphyrinogen-III oxidase (348 aa).

Ser104 is a binding site for substrate. Residues His108 and His118 each coordinate a divalent metal cation. His118 serves as the catalytic Proton donor. 120 to 122 (NYR) provides a ligand contact to substrate. Positions 152 and 182 each coordinate a divalent metal cation. The segment at 272 to 307 (YAEFNLVWDRGTIFGLQTNGRTESILMSLPPLARWE) is important for dimerization.

The protein belongs to the aerobic coproporphyrinogen-III oxidase family. Homodimer. Requires a divalent metal cation as cofactor.

It localises to the cytoplasm. The catalysed reaction is coproporphyrinogen III + O2 + 2 H(+) = protoporphyrinogen IX + 2 CO2 + 2 H2O. It functions in the pathway porphyrin-containing compound metabolism; protoporphyrin-IX biosynthesis; protoporphyrinogen-IX from coproporphyrinogen-III (O2 route): step 1/1. Its function is as follows. Involved in the heme and chlorophyll biosynthesis. Catalyzes the aerobic oxidative decarboxylation of propionate groups of rings A and B of coproporphyrinogen-III to yield the vinyl groups in protoporphyrinogen-IX. The polypeptide is Oxygen-dependent coproporphyrinogen-III oxidase (Prochlorococcus marinus (strain NATL1A)).